The primary structure comprises 257 residues: Small ribosomal subunit protein uS2 (257 aa).

It belongs to the universal ribosomal protein uS2 family.

The protein is Small ribosomal subunit protein uS2 of Bartonella henselae (strain ATCC 49882 / DSM 28221 / CCUG 30454 / Houston 1) (Rochalimaea henselae).